The sequence spans 492 residues: Probable cobyric acid synthase (492 aa).

The region spanning 252–444 (PIEVNIVKFS…FHGILENFEF (193 aa)) is the GATase cobBQ-type domain. C330 functions as the Nucleophile in the catalytic mechanism. Residue H436 is part of the active site.

It belongs to the CobB/CobQ family. CobQ subfamily.

Its pathway is cofactor biosynthesis; adenosylcobalamin biosynthesis. Functionally, catalyzes amidations at positions B, D, E, and G on adenosylcobyrinic A,C-diamide. NH(2) groups are provided by glutamine, and one molecule of ATP is hydrogenolyzed for each amidation. This chain is Probable cobyric acid synthase, found in Methanococcus maripaludis (strain C6 / ATCC BAA-1332).